The chain runs to 390 residues: Oxygen-dependent coproporphyrinogen-III oxidase (390 aa).

An important for dimerization region spans residues 131 to 140 (VLQDGDVFEK). Position 181 (Ser-181) interacts with substrate. His-195 acts as the Proton donor in catalysis. Substrate contacts are provided by residues 197-199 (NYR) and 348-353 (GARYES). The interval 329-365 (YVEFNLIYDRGTKFGLYTPGARYESILMSLPLHARWE) is important for dimerization.

This sequence belongs to the aerobic coproporphyrinogen-III oxidase family. As to quaternary structure, homodimer.

The enzyme catalyses coproporphyrinogen III + O2 + 2 H(+) = protoporphyrinogen IX + 2 CO2 + 2 H2O. It functions in the pathway porphyrin-containing compound metabolism; protoporphyrin-IX biosynthesis; protoporphyrinogen-IX from coproporphyrinogen-III (O2 route): step 1/1. Functionally, involved in the heme biosynthesis. Catalyzes the aerobic oxidative decarboxylation of propionate groups of rings A and B of coproporphyrinogen-III to yield the vinyl groups in protoporphyrinogen-IX. The chain is Oxygen-dependent coproporphyrinogen-III oxidase (Coprox) from Drosophila melanogaster (Fruit fly).